The following is a 236-amino-acid chain: Baculoviral IAP repeat-containing protein 8 (236 aa).

A BIR repeat occupies 7–70; the sequence is RLITFGTWMY…KWYPGCKYLL (64 aa). Zn(2+) is bound by residues C39, C42, H59, and C66. The RING-type zinc finger occupies 189-224; it reads CKICMDRHIAVVFIPCGHLVTCKQCAEAVDRCPMCS.

It belongs to the IAP family. In terms of assembly, binds to caspase-9. Testis specific in normal tissues.

It is found in the cytoplasm. Protects against apoptosis mediated by BAX. The polypeptide is Baculoviral IAP repeat-containing protein 8 (BIRC8) (Homo sapiens (Human)).